The following is a 317-amino-acid chain: Transaldolase (317 aa).

The Schiff-base intermediate with substrate role is filled by K132.

Belongs to the transaldolase family. Type 1 subfamily. As to quaternary structure, homodimer.

Its subcellular location is the cytoplasm. It catalyses the reaction D-sedoheptulose 7-phosphate + D-glyceraldehyde 3-phosphate = D-erythrose 4-phosphate + beta-D-fructose 6-phosphate. It participates in carbohydrate degradation; pentose phosphate pathway; D-glyceraldehyde 3-phosphate and beta-D-fructose 6-phosphate from D-ribose 5-phosphate and D-xylulose 5-phosphate (non-oxidative stage): step 2/3. Its function is as follows. Transaldolase is important for the balance of metabolites in the pentose-phosphate pathway. This chain is Transaldolase, found in Yersinia enterocolitica serotype O:8 / biotype 1B (strain NCTC 13174 / 8081).